The sequence spans 510 residues: Probable cytochrome P450 4d20 (510 aa).

Residue cysteine 455 coordinates heme.

This sequence belongs to the cytochrome P450 family. Heme serves as cofactor.

The protein localises to the endoplasmic reticulum membrane. It localises to the microsome membrane. Its function is as follows. May be involved in the metabolism of insect hormones and in the breakdown of synthetic insecticides. This chain is Probable cytochrome P450 4d20 (Cyp4d20), found in Drosophila melanogaster (Fruit fly).